The chain runs to 294 residues: N-acetylmuramic acid 6-phosphate etherase (294 aa).

The SIS domain maps to 56-219 (TSQALKKGGR…STLSMVSVGK (164 aa)). E84 acts as the Proton donor in catalysis. E115 is an active-site residue.

It belongs to the GCKR-like family. MurNAc-6-P etherase subfamily. As to quaternary structure, homodimer.

The enzyme catalyses N-acetyl-D-muramate 6-phosphate + H2O = N-acetyl-D-glucosamine 6-phosphate + (R)-lactate. It participates in amino-sugar metabolism; 1,6-anhydro-N-acetylmuramate degradation. The protein operates within amino-sugar metabolism; N-acetylmuramate degradation. Its pathway is cell wall biogenesis; peptidoglycan recycling. In terms of biological role, specifically catalyzes the cleavage of the D-lactyl ether substituent of MurNAc 6-phosphate, producing GlcNAc 6-phosphate and D-lactate. Together with AnmK, is also required for the utilization of anhydro-N-acetylmuramic acid (anhMurNAc) either imported from the medium or derived from its own cell wall murein, and thus plays a role in cell wall recycling. The polypeptide is N-acetylmuramic acid 6-phosphate etherase (Francisella philomiragia subsp. philomiragia (strain ATCC 25017 / CCUG 19701 / FSC 153 / O#319-036)).